The following is a 371-amino-acid chain: GDP-mannose transporter (371 aa).

Topologically, residues 1-51 (MGVISFYLIGQLLYLIRKKYTTTYRQQQQHQYNMDSKHSTSSSSSGSLATR) are cytoplasmic. The helical transmembrane segment at 52–72 (ISNSGPISIAAYCLSSILMTV) threads the bilayer. Topologically, residues 73 to 80 (TNKYVLSG) are lumenal. Residues 81 to 101 (FSFNLNFFLLAVQSIVCIVTI) form a helical membrane-spanning segment. Over 102–121 (GSLKSLNIITYRQFNKDEAK) the chain is Cytoplasmic. The chain crosses the membrane as a helical span at residues 122–138 (KWSPIAFLLVAMIYTSS). Topologically, residues 139–145 (KALQYLS) are lumenal. The chain crosses the membrane as a helical span at residues 146 to 162 (IPVYTIFKNLTIILIAY). Topologically, residues 163–171 (GEVIWFGGK) are cytoplasmic. Residues 172–192 (VTTMALSSFLLMVLSSVIAYY) form a helical membrane-spanning segment. At 193-206 (GDNAAVKSHDDAFA) the chain is on the lumenal side. Residues 207–227 (LYLGYFWMLTNCFASAAFVLI) form a helical membrane-spanning segment. Over 228–241 (MRKRIKLTNFKDFD) the chain is Cytoplasmic. A helical transmembrane segment spans residues 242-262 (TMYYNNLLSIPILLICSFIFE). Over 263 to 281 (DWSSANVSLNFPADNRVTT) the chain is Lumenal. A glycan (N-linked (GlcNAc...) asparagine) is linked at Asn268. A helical transmembrane segment spans residues 282–302 (ITAMILSGASSVGISYCSAWC). Topologically, residues 303–309 (VRVTSST) are cytoplasmic. A helical transmembrane segment spans residues 310–329 (TYSMVGALNKLPIALSGLIF). Over 330–332 (FEA) the chain is Lumenal. A helical transmembrane segment spans residues 333 to 355 (AVNFWSVSSIFVGFGAGLVYAVA). At 356–371 (KQKQQKEQSQQLPTTK) the chain is on the cytoplasmic side.

The protein belongs to the TPT transporter family. SLC35D subfamily. In terms of assembly, homooligomer.

It is found in the golgi apparatus membrane. Its subcellular location is the cytoplasmic vesicle membrane. It localises to the endoplasmic reticulum membrane. Its function is as follows. Involved in the import of GDP-mannose from the cytoplasm into the Golgi lumen. Involved in hyphal formation. This Candida albicans (strain SC5314 / ATCC MYA-2876) (Yeast) protein is GDP-mannose transporter (VRG4).